Reading from the N-terminus, the 439-residue chain is Chitinase-like protein Idgf1 (439 aa).

The first 20 residues, 1–20 (MRFQLCYLLGLLSVTSLSHA), serve as a signal peptide directing secretion. The GH18 domain occupies 22 to 439 (SNLICYYDST…IVRSIKYFMG (418 aa)). Cys26 and Cys53 are joined by a disulfide. N-linked (GlcNAc...) asparagine glycosylation is found at Asn122, Asn218, and Asn346. The cysteines at positions 340 and 423 are disulfide-linked.

It belongs to the glycosyl hydrolase 18 family. IDGF subfamily. In terms of processing, glycosylated.

The protein localises to the secreted. Its function is as follows. Cooperates with insulin-like peptides to stimulate the proliferation, polarization and motility of imaginal disk cells. May act by stabilizing the binding of insulin-like peptides to its receptor through a simultaneous interaction with both molecules to form a multiprotein signaling complex. This is Chitinase-like protein Idgf1 (Idgf1) from Drosophila yakuba (Fruit fly).